The primary structure comprises 417 residues: Glutamyl-tRNA reductase (417 aa).

Substrate is bound by residues 48–51, serine 100, 105–107, and glutamine 111; these read TCNR and EDQ. Catalysis depends on cysteine 49, which acts as the Nucleophile. 180–185 lines the NADP(+) pocket; that stretch reads GAGETG.

It belongs to the glutamyl-tRNA reductase family. In terms of assembly, homodimer.

The enzyme catalyses (S)-4-amino-5-oxopentanoate + tRNA(Glu) + NADP(+) = L-glutamyl-tRNA(Glu) + NADPH + H(+). It functions in the pathway porphyrin-containing compound metabolism; protoporphyrin-IX biosynthesis; 5-aminolevulinate from L-glutamyl-tRNA(Glu): step 1/2. In terms of biological role, catalyzes the NADPH-dependent reduction of glutamyl-tRNA(Glu) to glutamate 1-semialdehyde (GSA). This chain is Glutamyl-tRNA reductase, found in Methanothrix thermoacetophila (strain DSM 6194 / JCM 14653 / NBRC 101360 / PT) (Methanosaeta thermophila).